Reading from the N-terminus, the 248-residue chain is Cyclo(L-leucyl-L-leucyl) synthase (248 aa).

The active-site Nucleophile is the Ser37. Substrate-binding positions include Asn40, Tyr180–Glu184, Tyr204, and Lys209–Leu210.

This sequence belongs to the CDPS family. As to quaternary structure, monomer.

It carries out the reaction 2 L-leucyl-tRNA(Leu) = cyclo(L-leucyl-L-leucyl) + 2 tRNA(Leu) + 2 H(+). Its function is as follows. Involved in the biosynthesis of pulcherrimin, a red extracellular pigment. It uses activated amino acids in the form of aminoacyl-tRNAs (aa-tRNAs) as substrates to catalyze the ATP-independent formation of cyclodipeptides which are intermediates in diketopiperazine (DKP) biosynthetic pathways. Catalyzes the formation of cyclo(L-Leu-L-Leu) (cLL) from L-leucyl-tRNA(Leu). Can also incorporate various nonpolar residues, such as L-phenylalanine, L-leucine and methionine, into cyclodipeptides. The polypeptide is Cyclo(L-leucyl-L-leucyl) synthase (yvmC) (Bacillus subtilis (strain 168)).